A 113-amino-acid polypeptide reads, in one-letter code: Large ribosomal subunit protein bL17 (113 aa).

It belongs to the bacterial ribosomal protein bL17 family. Part of the 50S ribosomal subunit. Contacts protein L32.

The sequence is that of Large ribosomal subunit protein bL17 from Caldicellulosiruptor saccharolyticus (strain ATCC 43494 / DSM 8903 / Tp8T 6331).